The primary structure comprises 494 residues: Flagellin A (494 aa).

It belongs to the bacterial flagellin family. Heteromer of FlaA and FlaB. FlaB is located proximal to the hook while the remainder of the filament is composed of the predominant FlaA.

It is found in the secreted. The protein resides in the bacterial flagellum. Flagellin is the subunit protein which polymerizes to form the filaments of bacterial flagella. Important for motility and virulence. The protein is Flagellin A (flaA) of Helicobacter mustelae.